Here is a 1294-residue protein sequence, read N- to C-terminus: CLIP-associating protein 2 (1294 aa).

The disordered stretch occupies residues 1 to 61 (MAMGDDKSFD…KVGGASKEGG (61 aa)). Phosphoserine occurs at positions 8 and 14. The segment covering 47–61 (SAGGPKVGGASKEGG) has biased composition (gly residues). Residues 60 to 311 (GGAGAVDEDD…KSLQTYLKSS (252 aa)) are TOG 1. HEAT repeat units lie at residues 173–208 (HGAE…IRHT), 209–245 (HVPR…EWQT), and 250–287 (RHAA…HFPG). The segment at 314 to 368 (VASLPQSDRSSSSSQESLNRPFSSKWSTANPSTVAGRVSAGSSKASSLPGSLQRS) is disordered. Serine 316, serine 327, and serine 330 each carry phosphoserine. Low complexity predominate over residues 316-334 (SLPQSDRSSSSSQESLNRP). 2 stretches are compositionally biased toward polar residues: residues 335-346 (FSSKWSTANPST) and 353-367 (AGSS…SLQR). 4 positions are modified to phosphoserine: serine 360, serine 368, serine 370, and serine 407. Residues 409–467 (EDTSDKLDGTASEDGRVRAKLSAPLAGMGNAKADSRGRSRTKMVSQSQPGSRSGSPGRV) form a disordered region. Residues 411-425 (TSDKLDGTASEDGRV) show a composition bias toward basic and acidic residues. The interaction with microtubules, MAPRE1 and MAPRE3 stretch occupies residues 444–580 (RGRSRTKMVS…GPGYGISQSS (137 aa)). Low complexity predominate over residues 453 to 467 (SQSQPGSRSGSPGRV). Serine 455, serine 459, serine 463, serine 478, and serine 489 each carry phosphoserine. The disordered stretch occupies residues 488-557 (ASAQKRSKIP…PLASRHHSRS (70 aa)). The short motif at 494 to 497 (SKIP) is the SXIP motif 1; mediates interaction with MAPRE1 and targeting to microtubule plus ends element. Phosphoserine is present on serine 507. Positions 517 to 520 (SRIP) match the SXIP motif 2; mediates interaction with MAPRE1 and targeting to microtubule plus ends motif. Residues serine 525, serine 529, serine 585, serine 587, serine 596, serine 621, and serine 627 each carry the phosphoserine modification. The disordered stretch occupies residues 617 to 645 (YGMHSDDDANSDASSACSERSYSSRNGSI). The segment covering 627–641 (SDASSACSERSYSSR) has biased composition (low complexity). Residues 649–881 (MRQTEDVAEV…TKLLHNHLRN (233 aa)) are TOG 2. HEAT repeat units follow at residues 710 to 747 (RVFS…KMGA) and 772 to 809 (LQFN…QMDP). The residue at position 787 (threonine 787) is a Phosphothreonine. An interaction with RSN and localization to the Golgi and kinetochores region spans residues 872–1294 (TKLLHNHLRN…DPTTDVSGQS (423 aa)). 2 disordered regions span residues 878 to 928 (HLRN…FDYD) and 952 to 995 (SFRS…DSSQ). Polar residues-rich tracts occupy residues 880–892 (RNTG…SMGS) and 901–922 (SPAN…TLSP). Serine 892 carries the phosphoserine modification. Phosphoserine occurs at positions 952, 955, 1013, and 1029. Over residues 955-972 (SQEDMNEPLKRDSKKDDG) the composition is skewed to basic and acidic residues. Positions 1017-1294 (RDYNPYNYSD…DPTTDVSGQS (278 aa)) are required for cortical localization. 3 HEAT repeats span residues 1054–1091 (LDHS…TQEE), 1098–1135 (EHFK…HQPA), and 1216–1253 (LLLP…VIGD).

Belongs to the CLASP family. In terms of assembly, interacts with microtubules. Interacts with MAPRE1; probably required for targeting to the growing microtubule plus ends. Interacts with CLIP2, ERC1, MAPRE3, PHLDB2 and RSN. The interaction with ERC1 may be mediated by PHLDB2. Interacts with GCC2; recruits CLASP2 to Golgi membranes. Interacts with MACF1. Interacts with mtcl2 and MTCL1. In terms of processing, phosphorylated by GSK3B. Phosphorylation reduces MAPRE1 binding. Phosphorylation by GSK3B may negatively regulate binding to microtubule lattices in lamella. As to expression, brain-specific.

It localises to the cytoplasm. It is found in the cytoskeleton. The protein localises to the microtubule organizing center. Its subcellular location is the centrosome. The protein resides in the chromosome. It localises to the centromere. It is found in the kinetochore. The protein localises to the spindle. Its subcellular location is the golgi apparatus. The protein resides in the trans-Golgi network. It localises to the cell membrane. It is found in the cell projection. The protein localises to the ruffle membrane. Its subcellular location is the cell cortex. Functionally, microtubule plus-end tracking protein that promotes the stabilization of dynamic microtubules. Involved in the nucleation of noncentrosomal microtubules originating from the trans-Golgi network (TGN). Required for the polarization of the cytoplasmic microtubule arrays in migrating cells towards the leading edge of the cell. May act at the cell cortex to enhance the frequency of rescue of depolymerizing microtubules by attaching their plus-ends to cortical platforms composed of ERC1 and PHLDB2. This cortical microtubule stabilizing activity is regulated at least in part by phosphatidylinositol 3-kinase signaling. Also performs a similar stabilizing function at the kinetochore which is essential for the bipolar alignment of chromosomes on the mitotic spindle. Acts as a mediator of ERBB2-dependent stabilization of microtubules at the cell cortex. The protein is CLIP-associating protein 2 (CLASP2) of Homo sapiens (Human).